Consider the following 411-residue polypeptide: MRAERTSFLLALGLLMAGIRSVHCLPENVVVKDQRRRVDSHTLASSNTDFAFSLYKQLALKNPNKNVMFSPLSVSMALAFLSLGARGPTLTEILEGLKFNLTEIQETQIHQGFQHLLQALNRPSNQLQLSVGNAMFVQEELKLLDKFIEDARVLYSSEAFPTNFRDSEAARSLINDYVKNKTQGKIEELFKYLSPRTVLVLVNYIYFKAQWKTRFDPKHTEQAEFHVSKNKTVEVPMMTLDLETPYFRDKELGCMLVELTYSSNDSALFILPDEGKMQDLEAKLTPETLTRWRNSLQPRRIHELYLPKFSIKSNYELNDTLSQMGIKKIFTDADLSGITGTADLVVSQVVHGAALDVDEEGTEGAAATGIGIERTFLRIIVRVNRPFLIAVVLKDTQSIIFLGKVTNPSEA.

An N-terminal signal peptide occupies residues 1-24 (MRAERTSFLLALGLLMAGIRSVHC). 5 N-linked (GlcNAc...) asparagine glycosylation sites follow: Asn-100, Asn-180, Asn-230, Asn-264, and Asn-318.

Belongs to the serpin family. Homodimer.

It localises to the cytoplasmic vesicle. The protein resides in the secretory vesicle. It is found in the chromaffin granule. Its subcellular location is the secreted. Serine protease inhibitor. The polypeptide is Serpin A3-5 (Bos taurus (Bovine)).